The following is a 448-amino-acid chain: Ribosomal protein uS12 methylthiotransferase RimO (448 aa).

An MTTase N-terminal domain is found at 6-116 (PKVGIVSLGC…VVEAVHAAIP (111 aa)). Residues Cys-15, Cys-51, Cys-80, Cys-147, Cys-151, and Cys-154 each coordinate [4Fe-4S] cluster. The 239-residue stretch at 133 to 371 (LTPHHYAYLK…EAARQIADER (239 aa)) folds into the Radical SAM core domain. The region spanning 373 to 439 (AAKEGTRIEV…DYDLWGDVVE (67 aa)) is the TRAM domain.

Belongs to the methylthiotransferase family. RimO subfamily. Requires [4Fe-4S] cluster as cofactor.

The protein resides in the cytoplasm. It carries out the reaction L-aspartate(89)-[ribosomal protein uS12]-hydrogen + (sulfur carrier)-SH + AH2 + 2 S-adenosyl-L-methionine = 3-methylsulfanyl-L-aspartate(89)-[ribosomal protein uS12]-hydrogen + (sulfur carrier)-H + 5'-deoxyadenosine + L-methionine + A + S-adenosyl-L-homocysteine + 2 H(+). In terms of biological role, catalyzes the methylthiolation of an aspartic acid residue of ribosomal protein uS12. This chain is Ribosomal protein uS12 methylthiotransferase RimO, found in Paramagnetospirillum magneticum (strain ATCC 700264 / AMB-1) (Magnetospirillum magneticum).